The sequence spans 223 residues: Ribonuclease 3 (223 aa).

Residues 1 to 131 (MDGVDELLLR…LIGAVMVDQG (131 aa)) enclose the RNase III domain. Residue E44 participates in Mg(2+) binding. D48 is an active-site residue. D117 and E120 together coordinate Mg(2+). E120 is a catalytic residue. A DRBM domain is found at 157-220 (DPKTKLQKLT…AMSALASLEN (64 aa)).

Belongs to the ribonuclease III family. Homodimer. The cofactor is Mg(2+).

It localises to the cytoplasm. It catalyses the reaction Endonucleolytic cleavage to 5'-phosphomonoester.. Functionally, digests double-stranded RNA. Involved in the processing of primary rRNA transcript to yield the immediate precursors to the large and small rRNAs (23S and 16S). Processes some mRNAs, and tRNAs when they are encoded in the rRNA operon. Processes pre-crRNA and tracrRNA of type II CRISPR loci if present in the organism. The protein is Ribonuclease 3 of Tropheryma whipplei (strain Twist) (Whipple's bacillus).